The chain runs to 186 residues: Peptide deformylase (186 aa).

The Fe cation site is built by cysteine 99 and histidine 141. Glutamate 142 is a catalytic residue. Histidine 145 serves as a coordination point for Fe cation.

It belongs to the polypeptide deformylase family. Fe(2+) serves as cofactor.

The catalysed reaction is N-terminal N-formyl-L-methionyl-[peptide] + H2O = N-terminal L-methionyl-[peptide] + formate. Its function is as follows. Removes the formyl group from the N-terminal Met of newly synthesized proteins. Requires at least a dipeptide for an efficient rate of reaction. N-terminal L-methionine is a prerequisite for activity but the enzyme has broad specificity at other positions. This chain is Peptide deformylase, found in Chlamydia felis (strain Fe/C-56) (Chlamydophila felis).